The chain runs to 906 residues: Serine-aspartate repeat-containing protein C (906 aa).

The first 50 residues, 1 to 50, serve as a signal peptide directing secretion; the sequence is MNNKKTATNRKGMIPNRLNKFSIRKYSVGTASILVGTTLIFGLSGHEAKA. A disordered region spans residues 51–127; the sequence is AEHTNGELNQ…QPTKKNNDAT (77 aa). Residues 51-486 form a ligand binding A region region; that stretch reads AEHTNGELNQ…GSSTANGDQK (436 aa). Polar residues-rich tracts occupy residues 56–71 and 80–119; these read GELN…PSEN and RQQN…STQP. 2 CNA-B domains span residues 487-597 and 598-708; these read KYNL…YKTP and KYSL…EEET. Residues 669–881 are disordered; it reads KQTGTNTTED…TGSENNGSNN (213 aa). Composition is skewed to acidic residues over residues 676 to 686 and 703 to 845; these read TEDDKDADGGE and YFEE…DSDS. The short motif at 869–873 is the LPXTG sorting signal element; sequence LPETG. Thr-872 is modified (pentaglycyl murein peptidoglycan amidated threonine). A propeptide spans 873 to 906 (removed by sortase); it reads GSENNGSNNATLFGGLFAALGSLLLFGRRKKQNK.

The protein belongs to the serine-aspartate repeat-containing protein (SDr) family. In terms of assembly, homodimerizes; via N2-Domain. Interacts with host NRXN1; this interaction mediates bacterial attachment to host cells.

The protein resides in the secreted. Its subcellular location is the cell wall. Cell surface-associated calcium-binding protein which plays an important role in adhesion and pathogenesis. Mediates interactions with components of the extracellular matrix such as host NRXN1 to promote bacterial adhesion. The chain is Serine-aspartate repeat-containing protein C (sdrC) from Staphylococcus aureus (strain MRSA252).